A 408-amino-acid polypeptide reads, in one-letter code: GDSL esterase/lipase At1g54790 (408 aa).

An N-terminal signal peptide occupies residues 1 to 24 (MNITKMKLFYVILFFISSLQISNS). The Nucleophile role is filled by serine 38. 3 N-linked (GlcNAc...) asparagine glycosylation sites follow: asparagine 273, asparagine 289, and asparagine 361. Residues aspartate 370 and histidine 373 contribute to the active site.

Belongs to the 'GDSL' lipolytic enzyme family.

It is found in the secreted. This chain is GDSL esterase/lipase At1g54790, found in Arabidopsis thaliana (Mouse-ear cress).